The following is a 464-amino-acid chain: Protein ABHD18 (464 aa).

Residues 1–24 (MGVSKLDILYRRLLLTKLFIRGWG) form the signal peptide. Asn-341 carries N-linked (GlcNAc...) asparagine glycosylation.

The protein belongs to the AB hydrolase superfamily.

The protein resides in the secreted. The chain is Protein ABHD18 from Mus musculus (Mouse).